The primary structure comprises 99 residues: Ubiquitin-related modifier 1 homolog (99 aa).

Gly-99 carries the post-translational modification 1-thioglycine. Gly-99 is covalently cross-linked (Glycyl lysine isopeptide (Gly-Lys) (interchain with K-? in acceptor proteins)).

This sequence belongs to the URM1 family. Interacts with cer. C-terminal thiocarboxylation occurs in 2 steps, it is first acyl-adenylated (-COAMP) via the hesA/moeB/thiF part of the MOCS3 homolog, then thiocarboxylated (-COSH) via the rhodanese domain of the MOCS3 homolog.

It is found in the cytoplasm. The protein operates within tRNA modification; 5-methoxycarbonylmethyl-2-thiouridine-tRNA biosynthesis. In terms of biological role, acts as a sulfur carrier required for 2-thiolation of mcm(5)S(2)U at tRNA wobble positions of cytosolic tRNA(Lys), tRNA(Glu) and tRNA(Gln). Serves as sulfur donor in tRNA 2-thiolation reaction by being thiocarboxylated (-COSH) at its C-terminus by MOCS3. The sulfur is then transferred to tRNA to form 2-thiolation of mcm(5)S(2)U. Also acts as a ubiquitin-like protein (UBL) that is covalently conjugated via an isopeptide bond to lysine residues of target proteins such as Prx2/Jafrac1, Ciao1, Eip71CD and GILT1. The thiocarboxylated form serves as substrate for conjugation and oxidative stress specifically induces the formation of UBL-protein conjugates. The protein is Ubiquitin-related modifier 1 homolog of Drosophila virilis (Fruit fly).